A 528-amino-acid chain; its full sequence is Adhesion G-protein coupled receptor G5 (528 aa).

Positions 1–21 (MDHCGALFLCLCLLTLQNATT) are cleaved as a signal peptide. Topologically, residues 22–245 (ETWEELLSYM…SPALVPAELL (224 aa)) are extracellular. N-linked (GlcNAc...) asparagine glycosylation is found at Asn58, Asn65, Asn146, Asn147, Asn173, and Asn179. Positions 78 to 239 (FKLSCDFSGL…AVLMQLSPAL (162 aa)) constitute a GAIN-B domain. Disulfide bonds link Cys189–Cys221 and Cys209–Cys223. The tract at residues 189-239 (CVFWKEGARKQPWGGWSPEGCRTEQPSHSQVLCRCNHLTYFAVLMQLSPAL) is GPS. Residues 228-236 (YFAVLMQLS) are stachel. The helical transmembrane segment at 246-271 (APLTYISLVGCSISIVASLITVLLHF) threads the bilayer. Over 272–280 (HFRKQSDSL) the chain is Cytoplasmic. Residues 281–304 (TRIHMNLHASVLLLNIAFLLSPAF) traverse the membrane as a helical segment. Residues 305–314 (AMSPVPGSAC) lie on the Extracellular side of the membrane. The cysteines at positions 314 and 404 are disulfide-linked. Residues 315–340 (TALAAALHYALLSCLTWMAIEGFNLY) traverse the membrane as a helical segment. Residues 341–353 (LLLGRVYNIYIRR) lie on the Cytoplasmic side of the membrane. A helical membrane pass occupies residues 354 to 377 (YVFKLGVLGWGAPALLVLLSLSVK). Topologically, residues 378-410 (SSVYGPCTIPVFDSWENGTGFQNMSICWVRSPV) are extracellular. N-linked (GlcNAc...) asparagine glycans are attached at residues Asn394 and Asn400. Residues 411–435 (VHSVLVMGYGGLTSLFNLVVLAWAL) traverse the membrane as a helical segment. Topologically, residues 436–455 (WTLRRLRERADAPSVRACHD) are cytoplasmic. Residues 456–477 (TVTVLGLTVLLGTTWALAFFSF) traverse the membrane as a helical segment. Topologically, residues 478 to 481 (GVFL) are extracellular. Residues 482–505 (LPQLFLFTILNSLYGFFLFLWFCS) form a helical membrane-spanning segment. Residues 506–528 (QRCRSEAEAKAQIEAFSSSQTTQ) lie on the Cytoplasmic side of the membrane.

This sequence belongs to the G-protein coupled receptor 2 family. Adhesion G-protein coupled receptor (ADGR) subfamily. In terms of assembly, heterodimer of 2 chains generated by proteolytic processing; the large extracellular N-terminal fragment and the membrane-bound C-terminal fragment predominantly remain associated and non-covalently linked. Post-translationally, autoproteolytically processed at the GPS region of the GAIN-B domain; this cleavage modulates receptor activity. In terms of processing, N-glycsylated. In terms of tissue distribution, expressed in immune cells. Primarily found in granulocytes. Found in eosinophils.

The protein resides in the cell membrane. With respect to regulation, forms a heterodimer of 2 chains generated by proteolytic processing that remain associated through non-covalent interactions mediated by the GAIN-B domain. In the inactivated receptor, the Stachel sequence (also named stalk) is embedded in the GAIN-B domain, where it adopts a beta-strand conformation. On activation, the Stachel moves into the 7 transmembrane region and adopts a twisted hook-shaped configuration that forms contacts within the receptor, leading to coupling of a G-alpha protein, which activates signaling. The cleaved GAIN-B and N-terminal domains can then dissociate from the rest of the receptor. In terms of biological role, orphan adhesion G-protein coupled receptor (aGPCR). Ligand binding causes a conformation change that triggers signaling via guanine nucleotide-binding proteins (G proteins) and modulates the activity of downstream effectors, such as adenylate cyclase. ADGRG5 is specifically coupled to G(s) G proteins and mediates activation of adenylate cyclase activity. The sequence is that of Adhesion G-protein coupled receptor G5 from Homo sapiens (Human).